A 145-amino-acid polypeptide reads, in one-letter code: uncharacterized protein (145 aa).

This is an uncharacterized protein from Homo sapiens (Human).